Consider the following 456-residue polypeptide: MISRIKSFKNALNYDKMNCIEIILRRNDLMSTSFENKATNRGVITFTISQDKIKPALDKAFNKIKKDLNAPGFRKGHMPRPVFNQKFGEEVLYEDALNIVLPEAYEAAVTELGLDVVAQPKIDVVSMEKGKEWTLSAEVVTKPEVKLGDYKNLVVEVDASKEVSDEDVDAKIERERQNLAELIIKDGEAAQGDTVVIDFVGSVDGVEFDGGKGDNFSLELGSGQFIPGFEDQLVGAKAGDEVEVNVTFPESYQAEDLAGKAAKFMTTIHEVKTKEVPELDDELAKDIDEDVDTLEDLKVKYRKELEAAQETAYDDAVEGAAIELAVANAEIVDLPEEMIHEEVNRSVNEFMGNMQRQGISPEMYFQLTGTTQEDLHNQYSAEADKRVKTNLVIEAIAKAEGFEATDSEIEQEINDLATEYNMPADQVRSLLSADMLKHDIVMKKAVEVITSTASVK.

Residues 192–277 (GDTVVIDFVG…IHEVKTKEVP (86 aa)) form the PPIase FKBP-type domain.

It belongs to the FKBP-type PPIase family. Tig subfamily.

The protein resides in the cytoplasm. It carries out the reaction [protein]-peptidylproline (omega=180) = [protein]-peptidylproline (omega=0). Its function is as follows. Involved in protein export. Acts as a chaperone by maintaining the newly synthesized protein in an open conformation. Functions as a peptidyl-prolyl cis-trans isomerase. This is Trigger factor from Streptococcus pyogenes serotype M2 (strain MGAS10270).